Reading from the N-terminus, the 255-residue chain is Complement C1q-like protein 3 (255 aa).

The N-terminal stretch at 1–20 (MVLLLVILIPVLVSSAGTSA) is a signal peptide. The interval 39–109 (KAPSTAATPD…GLPGPPGAPG (71 aa)) is disordered. The Collagen-like domain occupies 61–111 (GPKGEAGRPGKAGPRGPPGEPGPPGPVGPPGEKGEPGRQGLPGPPGAPGLN). Residues 75–89 (RGPPGEPGPPGPVGP) show a composition bias toward pro residues. A C1q domain is found at 122 to 255 (STVPKIAFYA…TFSGFIIYAD (134 aa)).

In terms of assembly, forms homooligomers. Interacts with ADGRB3. Forms heterooligomers with C1QL2 and C1QL4, when proteins are coexpressed; this interaction does not occur after secretion. As to expression, highly expressed in brain and white adipose tissue. In gonadal fat pad, expressed at lower levels in adipocytes than in the stromal vascular fraction (VSP), which contains preadipocytes, fibroblasts, endothelial cells and occasional immune cells. Expression exhibits sexually dimorphism, with higher levels in females than in males (at protein level). Tends to be up-regulated in adipose tissue from obese males, but not females. Expressed in glial cells.

It localises to the secreted. Functionally, may regulate the number of excitatory synapses that are formed on hippocampus neurons. Has no effect on inhibitory synapses. Plays a role in glucose homeostasis. Via AMPK signaling pathway, stimulates glucose uptake in adipocytes, myotubes and hepatocytes and enhances insulin-stimulated glucose uptake. In a hepatoma cell line, reduces the expression of gluconeogenic enzymes G6PC1 and PCK1 and hence decreases de novo glucose production. This Mus musculus (Mouse) protein is Complement C1q-like protein 3 (C1ql3).